The sequence spans 158 residues: Ribosomal RNA large subunit methyltransferase H (158 aa).

Residues Leu73, Gly107, and 126–131 (FGEITL) each bind S-adenosyl-L-methionine.

This sequence belongs to the RNA methyltransferase RlmH family. As to quaternary structure, homodimer.

Its subcellular location is the cytoplasm. It carries out the reaction pseudouridine(1915) in 23S rRNA + S-adenosyl-L-methionine = N(3)-methylpseudouridine(1915) in 23S rRNA + S-adenosyl-L-homocysteine + H(+). Its function is as follows. Specifically methylates the pseudouridine at position 1915 (m3Psi1915) in 23S rRNA. This is Ribosomal RNA large subunit methyltransferase H from Rubrobacter xylanophilus (strain DSM 9941 / JCM 11954 / NBRC 16129 / PRD-1).